A 154-amino-acid chain; its full sequence is Cytochrome c-type biogenesis protein CcmE (154 aa).

At 1 to 8 (MTPQRKRR) the chain is on the cytoplasmic side. Residues 9 to 29 (LVMLAALAGGVGVAVALALAA) traverse the membrane as a helical; Signal-anchor for type II membrane protein segment. Residues 30 to 154 (LQQNINLFYS…GGTPAAEPQP (125 aa)) are Periplasmic-facing. 2 residues coordinate heme: histidine 124 and tyrosine 128. A disordered region spans residues 130–154 (PPEAAHALKQGAATSGGTPAAEPQP).

The protein belongs to the CcmE/CycJ family.

The protein resides in the cell inner membrane. In terms of biological role, heme chaperone required for the biogenesis of c-type cytochromes. Transiently binds heme delivered by CcmC and transfers the heme to apo-cytochromes in a process facilitated by CcmF and CcmH. In Bordetella petrii (strain ATCC BAA-461 / DSM 12804 / CCUG 43448), this protein is Cytochrome c-type biogenesis protein CcmE.